The chain runs to 569 residues: MKQSKLLIPTLKEVPNDAEALSHQMMLRAGYIRQISAGMYAYLPLAYRVLTNIEKIIRQEMEKIDAAEMLVPAVIPAELWKATGRYETYGPELFKLKNRHDREFILGPTHEETFTSIVRDEIKSYKRLPLTLYQIQAKYRDEDRPRYGLLRGREFIMKDAYSFHADEASLDDTFQDMAQAYQNIFERVGLKFRSIIGDGGAMGGKDSREYSAIAPVGEDTIVYSDASDYAANLEMARSLYVPKKSHASLKDMEKIDTPGVGTIDELAEFLKVGADQLVKSILFIADDQPVMALVRGDHEVNDVKLKNYLGADFLEMATPEQAQQYLGASFGSLGPVNVHDDVKIVADQYVKDMVNITVGANEDGHHFTNVNPERDFHAEAYVDIRFVQEGELSPDGAGVLKFTKGIEIGHIFKLGTRYSKDLHAEVLDANGRNIPVIMGCYGIGVSRLLSAIAEQRADENGLIWPKAIAPFDVHVIPVNPKKADQVEVADQVEAQLEAAGYNVLYDDRKERPGVKFADSDLMGIPARITIGKKASEGIVEIKLRQTGETLEVKQEEIANNLAVLLKNID.

It belongs to the class-II aminoacyl-tRNA synthetase family. ProS type 1 subfamily. Homodimer.

Its subcellular location is the cytoplasm. It carries out the reaction tRNA(Pro) + L-proline + ATP = L-prolyl-tRNA(Pro) + AMP + diphosphate. Catalyzes the attachment of proline to tRNA(Pro) in a two-step reaction: proline is first activated by ATP to form Pro-AMP and then transferred to the acceptor end of tRNA(Pro). As ProRS can inadvertently accommodate and process non-cognate amino acids such as alanine and cysteine, to avoid such errors it has two additional distinct editing activities against alanine. One activity is designated as 'pretransfer' editing and involves the tRNA(Pro)-independent hydrolysis of activated Ala-AMP. The other activity is designated 'posttransfer' editing and involves deacylation of mischarged Ala-tRNA(Pro). The misacylated Cys-tRNA(Pro) is not edited by ProRS. This is Proline--tRNA ligase from Lactiplantibacillus plantarum (strain ATCC BAA-793 / NCIMB 8826 / WCFS1) (Lactobacillus plantarum).